We begin with the raw amino-acid sequence, 32 residues long: Photosystem II reaction center protein Z (32 aa).

A helical transmembrane segment spans residues 9–31; it reads FILLGAVTWAILVFIVGSLNSYV.

Belongs to the PsbZ family. As to quaternary structure, PSII is composed of 1 copy each of membrane proteins PsbA, PsbB, PsbC, PsbD, PsbE, PsbF, PsbH, PsbI, PsbJ, PsbK, PsbL, PsbM, PsbT, PsbY, PsbZ, Psb30/Ycf12, at least 3 peripheral proteins of the oxygen-evolving complex and a large number of cofactors. It forms dimeric complexes.

The protein localises to the plastid. Its subcellular location is the chloroplast thylakoid membrane. In terms of biological role, may control the interaction of photosystem II (PSII) cores with the light-harvesting antenna, regulates electron flow through the 2 photosystem reaction centers. PSII is a light-driven water plastoquinone oxidoreductase, using light energy to abstract electrons from H(2)O, generating a proton gradient subsequently used for ATP formation. The polypeptide is Photosystem II reaction center protein Z (Euglena stellata).